We begin with the raw amino-acid sequence, 265 residues long: Polyphosphate glucokinase (265 aa).

Positions 1–18 (MTSTGPETSETPGATTQR) are enriched in polar residues. Residues 1–22 (MTSTGPETSETPGATTQRHGFG) are disordered. 24–29 (DVGGSG) contacts ATP.

The protein belongs to the ROK (NagC/XylR) family. In terms of assembly, homodimer.

It carries out the reaction [phosphate](n) + D-glucose = [phosphate](n-1) + D-glucose 6-phosphate + H(+). It catalyses the reaction D-glucose + ATP = D-glucose 6-phosphate + ADP + H(+). Its function is as follows. Catalyzes the phosphorylation of glucose using polyphosphate or ATP as the phosphoryl donor. Polyphosphate, rather than ATP, seems to be the major phosphate donor for the enzyme in M.tuberculosis. The sequence is that of Polyphosphate glucokinase (ppgK) from Mycobacterium tuberculosis (strain CDC 1551 / Oshkosh).